A 537-amino-acid polypeptide reads, in one-letter code: NAD(P)H-quinone oxidoreductase chain 4 3 (537 aa).

13 consecutive transmembrane segments (helical) span residues 6-26 (FPWL…IPII), 36-56 (WYGL…FWHY), 87-107 (LSMP…FAAW), 115-135 (LFYG…VAQD), 136-156 (LLLF…LISI), 169-189 (FILY…ALAF), 209-229 (AIEL…LPIF), 243-263 (SAPG…YALI), 277-297 (FAPV…CCAF), 314-334 (MGFV…GAVL), 335-355 (QMVS…VTYE), 387-407 (LALP…GIAT), and 417-437 (VVVV…LLSL).

This sequence belongs to the complex I subunit 4 family.

It localises to the cellular thylakoid membrane. It catalyses the reaction a plastoquinone + NADH + (n+1) H(+)(in) = a plastoquinol + NAD(+) + n H(+)(out). The catalysed reaction is a plastoquinone + NADPH + (n+1) H(+)(in) = a plastoquinol + NADP(+) + n H(+)(out). Functionally, NDH-1 shuttles electrons from NAD(P)H, via FMN and iron-sulfur (Fe-S) centers, to quinones in the respiratory chain. The immediate electron acceptor for the enzyme in this species is believed to be plastoquinone. Couples the redox reaction to proton translocation (for every two electrons transferred, four hydrogen ions are translocated across the cytoplasmic membrane), and thus conserves the redox energy in a proton gradient. In Trichormus variabilis (strain ATCC 29413 / PCC 7937) (Anabaena variabilis), this protein is NAD(P)H-quinone oxidoreductase chain 4 3.